The sequence spans 78 residues: D-alanyl carrier protein (78 aa).

In terms of domain architecture, Carrier spans 1 to 78; it reads MEFKEQVLDL…KIVEALEELR (78 aa). S36 is subject to O-(pantetheine 4'-phosphoryl)serine.

This sequence belongs to the DltC family. Post-translationally, 4'-phosphopantetheine is transferred from CoA to a specific serine of apo-DCP.

The protein resides in the cytoplasm. It functions in the pathway cell wall biogenesis; lipoteichoic acid biosynthesis. Carrier protein involved in the D-alanylation of lipoteichoic acid (LTA). The loading of thioester-linked D-alanine onto DltC is catalyzed by D-alanine--D-alanyl carrier protein ligase DltA. The DltC-carried D-alanyl group is further transferred to cell membrane phosphatidylglycerol (PG) by forming an ester bond, probably catalyzed by DltD. D-alanylation of LTA plays an important role in modulating the properties of the cell wall in Gram-positive bacteria, influencing the net charge of the cell wall. This is D-alanyl carrier protein from Staphylococcus haemolyticus (strain JCSC1435).